The following is a 166-amino-acid chain: Phosphopantetheine adenylyltransferase (166 aa).

S11 is a binding site for substrate. ATP-binding positions include 11-12 (SF) and H19. Positions 43, 76, and 90 each coordinate substrate. ATP contacts are provided by residues 91–93 (GLR), E101, and 126–132 (YRYFSSS).

Belongs to the bacterial CoaD family. Homohexamer. The cofactor is Mg(2+).

It is found in the cytoplasm. It carries out the reaction (R)-4'-phosphopantetheine + ATP + H(+) = 3'-dephospho-CoA + diphosphate. Its pathway is cofactor biosynthesis; coenzyme A biosynthesis; CoA from (R)-pantothenate: step 4/5. Its function is as follows. Reversibly transfers an adenylyl group from ATP to 4'-phosphopantetheine, yielding dephospho-CoA (dPCoA) and pyrophosphate. The protein is Phosphopantetheine adenylyltransferase of Streptococcus mutans serotype c (strain ATCC 700610 / UA159).